We begin with the raw amino-acid sequence, 424 residues long: Serine--tRNA ligase (424 aa).

230-232 contributes to the L-serine binding site; the sequence is TAE. 261–263 contributes to the ATP binding site; that stretch reads RSE. E284 is a binding site for L-serine. 348 to 351 contributes to the ATP binding site; the sequence is EISS. S384 contacts L-serine.

This sequence belongs to the class-II aminoacyl-tRNA synthetase family. Type-1 seryl-tRNA synthetase subfamily. As to quaternary structure, homodimer. The tRNA molecule binds across the dimer.

The protein resides in the cytoplasm. It carries out the reaction tRNA(Ser) + L-serine + ATP = L-seryl-tRNA(Ser) + AMP + diphosphate + H(+). The enzyme catalyses tRNA(Sec) + L-serine + ATP = L-seryl-tRNA(Sec) + AMP + diphosphate + H(+). It participates in aminoacyl-tRNA biosynthesis; selenocysteinyl-tRNA(Sec) biosynthesis; L-seryl-tRNA(Sec) from L-serine and tRNA(Sec): step 1/1. In terms of biological role, catalyzes the attachment of serine to tRNA(Ser). Is also able to aminoacylate tRNA(Sec) with serine, to form the misacylated tRNA L-seryl-tRNA(Sec), which will be further converted into selenocysteinyl-tRNA(Sec). This chain is Serine--tRNA ligase, found in Streptococcus pneumoniae serotype 4 (strain ATCC BAA-334 / TIGR4).